The following is a 233-amino-acid chain: Inner kinetochore subunit fta4 (233 aa).

Residues Thr-189 and Thr-191 each carry the phosphothreonine modification.

This sequence belongs to the NKP1 family. As to quaternary structure, component of the inner kinetochore constitutive centromere-associated network (CCAN) (also known as central kinetochore Sim4 complex in fission yeast), which is composed of at least cnl2, cnp3, cnp20, fta1, fta2, fta3, fta4, fta6, fta7, mal2, mhf1, mhf2, mis6, mis15, mis17, sim4 and wip1.

It is found in the nucleus. The protein resides in the chromosome. Its subcellular location is the centromere. It localises to the kinetochore. Functionally, component of the kinetochore, a multiprotein complex that assembles on centromeric DNA and attaches chromosomes to spindle microtubules, mediating chromosome segregation and sister chromatid segregation during meiosis and mitosis. Component of the inner kinetochore constitutive centromere-associated network (CCAN), which serves as a structural platform for outer kinetochore assembly. Fta2, fta3 and fta4 associate with the central core (cnt) and inner repeat (inr) region of the centromere. The sequence is that of Inner kinetochore subunit fta4 (fta4) from Schizosaccharomyces pombe (strain 972 / ATCC 24843) (Fission yeast).